The sequence spans 182 residues: Probable RNA 2'-phosphotransferase (182 aa).

This sequence belongs to the KptA/TPT1 family.

Removes the 2'-phosphate from RNA via an intermediate in which the phosphate is ADP-ribosylated by NAD followed by a presumed transesterification to release the RNA and generate ADP-ribose 1''-2''-cyclic phosphate (APPR&gt;P). May function as an ADP-ribosylase. The protein is Probable RNA 2'-phosphotransferase of Herpetosiphon aurantiacus (strain ATCC 23779 / DSM 785 / 114-95).